Consider the following 121-residue polypeptide: Small ribosomal subunit protein uS13 (121 aa).

The tract at residues G94–K121 is disordered. Basic residues predominate over residues A106–K121.

It belongs to the universal ribosomal protein uS13 family. Part of the 30S ribosomal subunit. Forms a loose heterodimer with protein S19. Forms two bridges to the 50S subunit in the 70S ribosome.

Located at the top of the head of the 30S subunit, it contacts several helices of the 16S rRNA. In the 70S ribosome it contacts the 23S rRNA (bridge B1a) and protein L5 of the 50S subunit (bridge B1b), connecting the 2 subunits; these bridges are implicated in subunit movement. Contacts the tRNAs in the A and P-sites. This Geobacillus kaustophilus (strain HTA426) protein is Small ribosomal subunit protein uS13.